Reading from the N-terminus, the 545-residue chain is Ribulokinase (545 aa).

Belongs to the ribulokinase family.

The catalysed reaction is D-ribulose + ATP = D-ribulose 5-phosphate + ADP + H(+). The enzyme catalyses L-ribulose + ATP = L-ribulose 5-phosphate + ADP + H(+). It participates in carbohydrate degradation; L-arabinose degradation via L-ribulose; D-xylulose 5-phosphate from L-arabinose (bacterial route): step 2/3. This chain is Ribulokinase, found in Staphylococcus aureus (strain Mu3 / ATCC 700698).